We begin with the raw amino-acid sequence, 402 residues long: Eukaryotic initiation factor 4A (402 aa).

A Q motif motif is present at residues 29 to 57 (ESFDDMELKEELLRGIYGFGFEKPSAIQK). Residues 60–230 (IVPCTTGKDV…NRFMRNPIRI (171 aa)) form the Helicase ATP-binding domain. 73–80 (AQSGTGKT) serves as a coordination point for ATP. Residues 178–181 (DEAD) carry the DEAD box motif. The 162-residue stretch at 241 to 402 (GIRQFYINVQ…EMPESIADLI (162 aa)) folds into the Helicase C-terminal domain.

The protein belongs to the DEAD box helicase family. eIF4A subfamily. In terms of assembly, eIF4F is a multi-subunit complex, the composition of which varies with external and internal environmental conditions. It is composed of at least EIF4A, EIF4E and EIF4G.

The enzyme catalyses ATP + H2O = ADP + phosphate + H(+). ATP-dependent RNA helicase which is a subunit of the eIF4F complex involved in cap recognition and is required for mRNA binding to ribosome. In the current model of translation initiation, eIF4A unwinds RNA secondary structures in the 5'-UTR of mRNAs which is necessary to allow efficient binding of the small ribosomal subunit, and subsequent scanning for the initiator codon. The protein is Eukaryotic initiation factor 4A (inf-1) of Caenorhabditis elegans.